The primary structure comprises 154 residues: UPF0756 membrane protein CKR_1028 (154 aa).

Transmembrane regions (helical) follow at residues 5 to 25, 48 to 68, 82 to 102, and 113 to 133; these read IILI…VALA, NGLF…IADG, WLGI…GLGM, and IMPA…GVPV.

The protein belongs to the UPF0756 family.

It localises to the cell membrane. This Clostridium kluyveri (strain NBRC 12016) protein is UPF0756 membrane protein CKR_1028.